The chain runs to 1648 residues: Vitellogenin-6 (1648 aa).

Positions 1–15 are cleaved as a signal peptide; sequence MRFAVLLALFGLALA. A Vitellogenin domain is found at 26 to 691; it reads YRSGREYRYQ…SNDSVLPKEI (666 aa). 2 disulfides stabilise this stretch: Cys178–Cys203 and Cys219–Cys222. Residues Asn237, Asn371, and Asn683 are each glycosylated (N-linked (GlcNAc...) asparagine). The segment at 1070–1092 is disordered; the sequence is EKNVEYEQEDKEPKSSQLQSQIR. N-linked (GlcNAc...) asparagine glycosylation occurs at Asn1295. Residues 1346-1514 form the VWFD domain; it reads PECIVKSKEI…SYLSKDDECE (169 aa). 2 cysteine pairs are disulfide-bonded: Cys1348–Cys1477 and Cys1370–Cys1513. N-linked (GlcNAc...) asparagine glycans are attached at residues Asn1584 and Asn1617.

Post-translationally, the precursor protein is probably further processed into vitellin polypeptides VT2 and VT3. Both VT2 and VT3 polypeptides seem to be N-glycosylated.

Its subcellular location is the secreted. Functionally, precursor of the egg-yolk proteins that are sources of nutrients during embryonic development. This is Vitellogenin-6 (vit-6) from Oscheius tipulae.